Reading from the N-terminus, the 112-residue chain is uncharacterized protein (112 aa).

The tract at residues 91 to 112 (ENQRKKGTRKRRSSEVDSKEKS) is disordered. Over residues 103–112 (SSEVDSKEKS) the composition is skewed to basic and acidic residues.

This is an uncharacterized protein from Caenorhabditis elegans.